The sequence spans 107 residues: U1-lycotoxin-Ls1n (107 aa).

An N-terminal signal peptide occupies residues 1 to 20 (MMKVLVVVALLVTLISYSSS). The propeptide occupies 21 to 41 (EGIDDLEADELLSLMANEQTR). 4 disulfide bridges follow: Cys-44–Cys-59, Cys-51–Cys-68, Cys-58–Cys-86, and Cys-70–Cys-84.

It belongs to the neurotoxin 19 (CSTX) family. 04 (U1-Lctx) subfamily. As to expression, expressed by the venom gland.

The protein resides in the secreted. This is U1-lycotoxin-Ls1n from Lycosa singoriensis (Wolf spider).